Reading from the N-terminus, the 459-residue chain is MANITNEFMGHDMLAPFTAGWQSDMEPLVIEKSKGSYVYDINGKKYLDTLSGLWCATLGGSETRLVEAANKQLNTLPFYHSFWNRTTKPSLDLAKELLNMFTANKMAKVFFTNSGSEANDTQVKLVWYYNNALGRPQKKKIIARAKAYHGSTYISAGLSGLPPMHQKFDLPPPFVLHTECPHYWAYHLPGETEEEFSTRLANNLESLILNEGPETVAAFIAEPVLGAAGVILPPATYFDKVQAILRKHDILFIADEVVCGFGRLGTMFGSDKYNIKPDLVSVAKALSSGYMPIAAVLVSQKISSVILSESNKIGAFCHGFTYSGHPVACAVALEALKIYKERNITEVVNKISQKFQEGLKAFADSPIIGEIRGTGLALSTEFVDNKSPNDPFPYEWAVGTYFGAQCAKYGMLVSSTGDHVNMAPPFTLSLEELDELIRIYGKALKDTEKRVEELKSQKK.

Pyridoxal 5'-phosphate is bound by residues 115-116 (GS) and Asp-255. Lys-284 carries the N6-(pyridoxal phosphate)lysine modification. Position 320–321 (320–321 (FT)) interacts with pyridoxal 5'-phosphate. Residues 428 to 459 (LSLEELDELIRIYGKALKDTEKRVEELKSQKK) adopt a coiled-coil conformation.

It belongs to the class-III pyridoxal-phosphate-dependent aminotransferase family. Expressed in placental tissue of immature fruit.

The catalysed reaction is vanillin + L-alanine = vanillylamine + pyruvate. Involved in the biosynthesis of capsaicinoids natural products, pungent alkaloids synthesized from phenylpropanoid intermediates in the placental tissue of chili pepper fruit acting as repellant on herbivorous mammals and conferring spiciness to hot peppers. Can transfer an amine from alanine to vanillin, forming vanillylamine and pyruvate. This chain is Vanillin aminotransferase, found in Capsicum frutescens (Cayenne pepper).